The primary structure comprises 213 residues: ATP phosphoribosyltransferase (213 aa).

This sequence belongs to the ATP phosphoribosyltransferase family. Short subfamily. In terms of assembly, heteromultimer composed of HisG and HisZ subunits.

The protein resides in the cytoplasm. It catalyses the reaction 1-(5-phospho-beta-D-ribosyl)-ATP + diphosphate = 5-phospho-alpha-D-ribose 1-diphosphate + ATP. The protein operates within amino-acid biosynthesis; L-histidine biosynthesis; L-histidine from 5-phospho-alpha-D-ribose 1-diphosphate: step 1/9. In terms of biological role, catalyzes the condensation of ATP and 5-phosphoribose 1-diphosphate to form N'-(5'-phosphoribosyl)-ATP (PR-ATP). Has a crucial role in the pathway because the rate of histidine biosynthesis seems to be controlled primarily by regulation of HisG enzymatic activity. In Synechococcus sp. (strain RCC307), this protein is ATP phosphoribosyltransferase.